The chain runs to 469 residues: MSKRSKGKILRVIGPVVDVQFEEGELPDIYDALEVINPQTGKKLILEVEQLIGDNAVRTVALDTTDGLMRGLEVENTGEPIKVPVGKGALGRMFNVIGEPIDGKEDVKDVEYWPIHRTPPSITEQSTSVEILETGIKVIDLLAPFPKGGKIGFFGGAGVGKTVLVMELIRNIAIEHHGFSMFAGVGERTREGNELYLDMQEAEVLDNTVLVFGQMNEPPGARFRVALSALTMAEYFRDVEGRDVLLFIDNIFRFVQAGSEVSALLGRMPSAVGYQPTLATDMGELQERITSTKKGSITSVQAIYVPADDITDPAPATTFTHLDATVVLSRRRAALGLYPAVDPLDSTSKMLDPNVVGQEHYEVARGVQEVLQRYKDLQDIIAILGMEELSEEDKLIVQRARKIERFLSQPVHVAEKFSNIPGKYVPISETIRGFKEILEGKYDDLPEMAFYMVGTIDEAVEKAKKLQKA.

155 to 162 lines the ATP pocket; the sequence is GGAGVGKT.

It belongs to the ATPase alpha/beta chains family. In terms of assembly, F-type ATPases have 2 components, CF(1) - the catalytic core - and CF(0) - the membrane proton channel. CF(1) has five subunits: alpha(3), beta(3), gamma(1), delta(1), epsilon(1). CF(0) has three main subunits: a(1), b(2) and c(9-12). The alpha and beta chains form an alternating ring which encloses part of the gamma chain. CF(1) is attached to CF(0) by a central stalk formed by the gamma and epsilon chains, while a peripheral stalk is formed by the delta and b chains.

The protein localises to the cell inner membrane. It catalyses the reaction ATP + H2O + 4 H(+)(in) = ADP + phosphate + 5 H(+)(out). Functionally, produces ATP from ADP in the presence of a proton gradient across the membrane. The catalytic sites are hosted primarily by the beta subunits. This is ATP synthase subunit beta from Thermosipho melanesiensis (strain DSM 12029 / CIP 104789 / BI429).